Consider the following 266-residue polypeptide: 3-methyl-2-oxobutanoate hydroxymethyltransferase (266 aa).

Aspartate 43 and aspartate 82 together coordinate Mg(2+). 3-methyl-2-oxobutanoate-binding positions include 43–44, aspartate 82, and lysine 110; that span reads DS. A Mg(2+)-binding site is contributed by glutamate 112. Catalysis depends on glutamate 179, which acts as the Proton acceptor.

The protein belongs to the PanB family. In terms of assembly, homodecamer; pentamer of dimers. The cofactor is Mg(2+).

It localises to the cytoplasm. It catalyses the reaction 3-methyl-2-oxobutanoate + (6R)-5,10-methylene-5,6,7,8-tetrahydrofolate + H2O = 2-dehydropantoate + (6S)-5,6,7,8-tetrahydrofolate. It participates in cofactor biosynthesis; (R)-pantothenate biosynthesis; (R)-pantoate from 3-methyl-2-oxobutanoate: step 1/2. In terms of biological role, catalyzes the reversible reaction in which hydroxymethyl group from 5,10-methylenetetrahydrofolate is transferred onto alpha-ketoisovalerate to form ketopantoate. This Psychrobacter arcticus (strain DSM 17307 / VKM B-2377 / 273-4) protein is 3-methyl-2-oxobutanoate hydroxymethyltransferase.